A 132-amino-acid chain; its full sequence is MAFQFPDHFRFADTHEYASLDGELVRIGISAFAVDQLGDIVFVDLPEVGDRLNRGTTFGSVESVKAVEDLHAPISGELVRINESVLSSPDELQNDPHGEGWLLVVRPADPAQLQDLMDAATYANKVAIESSN.

The 83-residue stretch at 24 to 106 folds into the Lipoyl-binding domain; it reads LVRIGISAFA…HGEGWLLVVR (83 aa). K65 bears the N6-lipoyllysine mark.

This sequence belongs to the GcvH family. The glycine cleavage system is composed of four proteins: P, T, L and H. (R)-lipoate serves as cofactor.

The glycine cleavage system catalyzes the degradation of glycine. The H protein shuttles the methylamine group of glycine from the P protein to the T protein. This Prochlorococcus marinus (strain MIT 9313) protein is Glycine cleavage system H protein.